Here is a 201-residue protein sequence, read N- to C-terminus: Imidazole glycerol phosphate synthase subunit HisH 1 (201 aa).

A Glutamine amidotransferase type-1 domain is found at 1–201; the sequence is MIALIDYKAG…LKLLENFARL (201 aa). The active-site Nucleophile is Cys80. Active-site residues include His183 and Glu185.

In terms of assembly, heterodimer of HisH and HisF.

It is found in the cytoplasm. The enzyme catalyses 5-[(5-phospho-1-deoxy-D-ribulos-1-ylimino)methylamino]-1-(5-phospho-beta-D-ribosyl)imidazole-4-carboxamide + L-glutamine = D-erythro-1-(imidazol-4-yl)glycerol 3-phosphate + 5-amino-1-(5-phospho-beta-D-ribosyl)imidazole-4-carboxamide + L-glutamate + H(+). It carries out the reaction L-glutamine + H2O = L-glutamate + NH4(+). It functions in the pathway amino-acid biosynthesis; L-histidine biosynthesis; L-histidine from 5-phospho-alpha-D-ribose 1-diphosphate: step 5/9. IGPS catalyzes the conversion of PRFAR and glutamine to IGP, AICAR and glutamate. The HisH subunit provides the glutamine amidotransferase activity that produces the ammonia necessary to HisF for the synthesis of IGP and AICAR. The protein is Imidazole glycerol phosphate synthase subunit HisH 1 (hisH1) of Campylobacter jejuni subsp. jejuni serotype O:23/36 (strain 81-176).